The primary structure comprises 689 residues: Glycine--tRNA ligase beta subunit (689 aa).

This sequence belongs to the class-II aminoacyl-tRNA synthetase family. As to quaternary structure, tetramer of two alpha and two beta subunits.

The protein resides in the cytoplasm. It catalyses the reaction tRNA(Gly) + glycine + ATP = glycyl-tRNA(Gly) + AMP + diphosphate. The sequence is that of Glycine--tRNA ligase beta subunit from Salmonella choleraesuis (strain SC-B67).